The following is a 689-amino-acid chain: Long-chain-fatty-acid--CoA ligase 2 (689 aa).

An ATP-binding site is contributed by 252 to 263; the sequence is YTSGSTGKPKGV. The short motif at 518 to 567 is the FACS element; it reads DGWFKTGDVGEIAKGNTLRLIDRKKNIVKSLNGEYIALEKIEAQFFTSPL.

This sequence belongs to the ATP-dependent AMP-binding enzyme family. Requires Mg(2+) as cofactor.

The protein localises to the golgi apparatus. It is found in the vacuole membrane. The catalysed reaction is a long-chain fatty acid + ATP + CoA = a long-chain fatty acyl-CoA + AMP + diphosphate. Esterification, concomitant with transport, of endogenous long-chain fatty acids into metabolically active CoA thioesters for subsequent degradation or incorporation into phospholipids. Plays an important role in the determination of viability in the stationary phase. This Schizosaccharomyces pombe (strain 972 / ATCC 24843) (Fission yeast) protein is Long-chain-fatty-acid--CoA ligase 2 (lcf2).